Consider the following 245-residue polypeptide: Probable 2-phosphosulfolactate phosphatase (245 aa).

It belongs to the ComB family. The cofactor is Mg(2+).

The enzyme catalyses (2R)-O-phospho-3-sulfolactate + H2O = (2R)-3-sulfolactate + phosphate. This chain is Probable 2-phosphosulfolactate phosphatase, found in Synechococcus sp. (strain RCC307).